A 377-amino-acid polypeptide reads, in one-letter code: Succinyl-diaminopimelate desuccinylase (377 aa).

A Zn(2+)-binding site is contributed by His-66. The active site involves Asp-68. Asp-99 contacts Zn(2+). Residue Glu-133 is the Proton acceptor of the active site. Zn(2+) is bound by residues Glu-134, Glu-162, and His-348.

The protein belongs to the peptidase M20A family. DapE subfamily. As to quaternary structure, homodimer. The cofactor is Zn(2+). Co(2+) is required as a cofactor.

It carries out the reaction N-succinyl-(2S,6S)-2,6-diaminopimelate + H2O = (2S,6S)-2,6-diaminopimelate + succinate. The protein operates within amino-acid biosynthesis; L-lysine biosynthesis via DAP pathway; LL-2,6-diaminopimelate from (S)-tetrahydrodipicolinate (succinylase route): step 3/3. Functionally, catalyzes the hydrolysis of N-succinyl-L,L-diaminopimelic acid (SDAP), forming succinate and LL-2,6-diaminopimelate (DAP), an intermediate involved in the bacterial biosynthesis of lysine and meso-diaminopimelic acid, an essential component of bacterial cell walls. The protein is Succinyl-diaminopimelate desuccinylase of Xylella fastidiosa (strain M23).